Consider the following 98-residue polypeptide: Cuticle protein 67, isoform A (98 aa).

Repeat copies occupy residues 7 to 10 (AAPA), 15 to 18 (AAPA), 22 to 25 (AAPA), 79 to 82 (AAPA), 86 to 89 (AAPA), and 92 to 95 (AAPA).

Its function is as follows. Component of the cuticle of migratory locust which contains more than 100 different structural proteins. In Locusta migratoria (Migratory locust), this protein is Cuticle protein 67, isoform A.